We begin with the raw amino-acid sequence, 172 residues long: UBA-like domain-containing protein 2 (172 aa).

Positions 118–130 are enriched in pro residues; it reads PPNQQPVWLPPSS. Residues 118–172 are disordered; the sequence is PPNQQPVWLPPSSPTGHHTLHHHHHHMHPPPSWPPVSQPANGPQTPVISALHGQR. Residues 135–145 show a composition bias toward basic residues; it reads HTLHHHHHHMH.

It belongs to the UBALD family.

This Danio rerio (Zebrafish) protein is UBA-like domain-containing protein 2 (ubald2).